The chain runs to 299 residues: ATP synthase gamma chain (299 aa).

It belongs to the ATPase gamma chain family. As to quaternary structure, F-type ATPases have 2 components, CF(1) - the catalytic core - and CF(0) - the membrane proton channel. CF(1) has five subunits: alpha(3), beta(3), gamma(1), delta(1), epsilon(1). CF(0) has three main subunits: a, b and c.

It localises to the cell membrane. Functionally, produces ATP from ADP in the presence of a proton gradient across the membrane. The gamma chain is believed to be important in regulating ATPase activity and the flow of protons through the CF(0) complex. This is ATP synthase gamma chain from Leifsonia xyli subsp. xyli (strain CTCB07).